A 161-amino-acid chain; its full sequence is uncharacterized protein (161 aa).

This is an uncharacterized protein from Saccharomyces cerevisiae (strain ATCC 204508 / S288c) (Baker's yeast).